Consider the following 357-residue polypeptide: U5 small nuclear ribonucleoprotein 40 kDa protein (357 aa).

Lys-18 is covalently cross-linked (Glycyl lysine isopeptide (Lys-Gly) (interchain with G-Cter in SUMO2)). Arg-21 bears the Asymmetric dimethylarginine mark. WD repeat units lie at residues 64 to 103, 107 to 146, 149 to 189, 191 to 230, 233 to 272, 283 to 322, and 325 to 357; these read GHEGEVYCCKFHPNGSTLASAGFDRLILLWNVYGDCGNYA, GYSGAVMELHYNTDGSMLFSASTDKTVAVWDSETGERVKR, GHTS…AIQT, QNTYQVLAVTFNDTSDQIISGGIDNDIKVWDLRQNKLTYT, GHADSVTGLSLSSEGSYLLSNAMDNTVRVWDVRPFAPKER, NFEKNLLRCSWSPDGSKIAAGSADRSVCVWDTTSRRILYK, and GHAGSINEVAFHPDEPIIISASSDKRLYMGEIQ. Residue Lys-270 forms a Glycyl lysine isopeptide (Lys-Gly) (interchain with G-Cter in SUMO2) linkage.

In terms of assembly, component of the pre-catalytic and catalytic spliceosome complexes. Component of the postcatalytic spliceosome P complex. Part of the U5 snRNP complex. Interacts with PRPF8. Component of the U4/U6-U5 tri-snRNP complex composed of the U4, U6 and U5 snRNAs and at least PRPF3, PRPF4, PRPF6, PRPF8, PRPF31, SNRNP200, TXNL4A, WDR57, SNRNP40, DDX23, CD2BP2, PPIH, SNU13, EFTUD2, SART1 and USP39. Component of the minor spliceosome, which splices U12-type introns.

The protein localises to the nucleus. Its function is as follows. Required for pre-mRNA splicing as component of the activated spliceosome. Component of the U5 small nuclear ribonucleoprotein (snRNP) complex and the U4/U6-U5 tri-snRNP complex, building blocks of the spliceosome. As a component of the minor spliceosome, involved in the splicing of U12-type introns in pre-mRNAs. This chain is U5 small nuclear ribonucleoprotein 40 kDa protein (SNRNP40), found in Pongo abelii (Sumatran orangutan).